We begin with the raw amino-acid sequence, 268 residues long: Indole-3-glycerol phosphate synthase 2 (268 aa).

This sequence belongs to the TrpC family.

It carries out the reaction 1-(2-carboxyphenylamino)-1-deoxy-D-ribulose 5-phosphate + H(+) = (1S,2R)-1-C-(indol-3-yl)glycerol 3-phosphate + CO2 + H2O. It participates in amino-acid biosynthesis; L-tryptophan biosynthesis; L-tryptophan from chorismate: step 4/5. This chain is Indole-3-glycerol phosphate synthase 2 (trpC2), found in Ralstonia nicotianae (strain ATCC BAA-1114 / GMI1000) (Ralstonia solanacearum).